Here is a 3912-residue protein sequence, read N- to C-terminus: MCEVCADFQNLLELYEVRVASSDLKFQLLLKSEIETTFNYIQSWPQRQCMCLYRDTKNYDRFNLVVQSLICLTVQHLKHIDHLIDNYKRLTASAAQVVAQAQQQREQQRDEASAQAEAKESSAPAEEPKKEEPSGSAGEEAQGSGDGPAKKPPVGPCTPPPPQTANPQHKSHLQYTEEPWILPEVEKLLVLVSKVFLLNFPLYIAHKHGMHSRLDDLQAEEAHHLALICDLHDNDLPIYLLRNVSLFCNSGGFGAMSLCFEHPDLPVSTAHSMTAAVSNVKLWLNYHCNTQLFVPLRSRILQYMCKLSDQSLRSAATRAMADFVWSSMRDPLDVAVNFDTEGLALAFKYFTSTTLTMRLAGMAQINAHINLFNEICTTETVNEVELFGQRIANWLTENHIVQHLFGPNLHVEIVKQAHVLLNFLAVENQISEEDIKLIWQATQLKHCSKTIFDILPSLVKNLTPRPAMHLYSLLCRMDPKEHTEQSIYIASALTKQLWTRDTSRSQMNLMQDHLLGSNVTASSSDSGSIEGSNTEDDHVGADDSSIASGGGGGGVGNKSPIDGVTPCKQARHRRHICDPTTEKGKQISPEDMAKVDLVNKRIVNIIDNTSSEEELQSRAALELQLHRSRKKTSNKRRRQKTNKQIILPHELVEIWDGVEDVPSSDEADGEADGDGEGELLADSDECSDGATSQLVPDAVLKHLQGEGPFIRAIETNINELLSGAENDGSYSSPMSNKSEKNLADFDDEDVSPCEEELAQLVSSRANCSDVPPAFAAAAAAMMVAQSAMALQKSGESNVAAAAAAVAAAAAATGTAQQTLVAMNRQASVAAAAAVVAAAKAKSDSDVDLMDVVSGGKQHHSPKASQGSSTSGSTPVQPSFKLNDVCQPGNTLLWDLLQDDKIGQLGESLALEAEKALATLLCFSMDRQLRTKFIEGCLYNVANNRSVIVSLRLLPKLFASFQQFRPSDTHSMTMWAERNHRMMQCFFNNIRHYARRHAEVLITQNGEQQQQQLGGQLYSHKTQVSVRLQFLSSIFSTVGSPKSFRLTLEQLDALWEWLAHDPECADCYFSWLQAQAKGGDQHALGIEALQHLYLKKLPELRPEEFSMVALGLFQQLCSFARIAMAEYDNHSDQISASASAVGMYHLWKIALRAQSNDVSLAAIQYINMYYMGQQLRLEKEFVSQCMENLVQAATALESIDDENALMRVQRGLLLLNTHLDTFRRRYAFHLRRWAIEGKGIGSHSNLKNEGAGPPLRIVLQQAGLSEKSLLQMHACDLIADLKAEVSKWWESLQTGLAAPVLGLLLSDGPLRIITQGQELTSDYDERSLGDAGFKDNQIVYVSLGGRGARRKESNLEHPSMLPPPPKECLPTVLLLQPKYFEKLFCLMQTLGDMQPQASTVNPQHHTKAQLLSRRVWDILAMLPTNPHILDAFKSLVTDLSELEQLDAGGEEEQLATKRKQIKQKFRDLLDPNNLQKFMYSLHIVESLALTSSRRGESNGNVAMGNTPEQVRVKKSSMGRRRNSNEQPPPPPPEVKMSKEQLCELEAPLTPTPSTGLQDVETEASSSSGGDKENQPKQHSKRQKKGETFEQEKERPVGCSTPPSPTPPPPALSVVERGDNKWSEAFVKCGGLRHLYEIFSEGQLQQSAHPKELALNEWRHDCLASLLRILWLLGFEELQSADAHVLMSRPHPFMLQLMEVPQCLTRLSSILNDEVHQQHQASSANPLVFPYQFQHLRTGFWGRAQLIQFAMNILVSFVHASAEARRLLWAPTGTDHCRWLQKFILEDPEPAVRREICAGLYRICLGNAHSYRLLLAPLLHKLIALLPLAEQMSSGNQHTQFLLSEEGKDPYGPACRDYFWLLARLVDTLSPEMVAEEHIDIEMLCESISQSILTREYYELRHGYQDDGLVGLLNLMSNLIKYDTTFKYTPKALSFIEQLIGFLFDMPSPADRQKPKCKSASSRASAYDLLVELCRGCATNYAYLHGRLLAQHKSGPKQPYPWDYWPRDEGRAECGYVGLTNLGATCYMASCVQHLYMMPQARAAVLRVPPNAARKHGPTLLELQRMFAYLLESERKSYNPRSFCRVYQMDHQPLNTGEQKDMAEFFIDLVSKLEDMTPDLKHLVKRLFCGSLSNNVVSLDCGHVSRTAEDFYTVRCQVADMRNLQESLDEVTVKDTLEGDNMYTCSQCGKKVRAEKRACFKKLPQILCFNTMRYTFNMVTMLKEKVNTHFSFPLRLNMCHYVEKTLMPQQYKEERERRQKEKEGADGSGDGNDNEKAEATLDDDIEECYEYELVGVTVHTGTADGGHYYSFIKERTKTSYHTHERWFLFNDAEVKPFDPSQIAAECFGGEMTSKTYDSVTEKYLDFSFEKTNSAYMLFYERRLPEHLQRRHSELLVTPTPSPTVEEKSEAEEPTKMETSSSEIKADVDVEVEVEEKDKEKPAQTDTESKETPAKEEIADDKSKQDEPEEKKIEKQSREGEEKSETDEKPTEMTTVSTEEEKQPTANCDNHQQNNNSNSKASNDQQPSTSKAAQKLQLFRPLLNKELEDWIWQDNRQFLQDRNIFEHTYFNFMWQICGHIPQSLISETDVTCMAAKLSVSFFIETFIHAKEKPTMVPWVELLTKQFNASQEACEWFLSHMSQEPYWPVQVLIQCPNQMVRQMFQRLVIHVIQQLRASHAHLYLEVETDEDDKELIGQASCVTRFIGSLISLLEHGARANLRHLSEYFGLLCEFSRMGDEEAMYLLRIGVLKSLVDFYLGHKQTDSIDISSDNEDNSSEEALSVEKMRPASLDKMIALCASLVERSRGADFRLRLSPKDFSAIAGGKGFPFLYQQIKDGINPHQTKHLIHALCRWDERLATQIIGMLFASVTKHTELCAPFFKLLTLLTETQGGPVGLPCFTQLILPRMWDAAEYCPQSVLDWLSLQATKNKIAHAWILQSAEKWLEQFLLAHDNTRVRNAAAFLLVALVPSQPFRANFRAHSQHKLLALNPHSYRDINSDAQAVLHQVITLLLRLLRPARVYADIGAHGTTKLTAYFNLLSYCMVSKTEKLMASSYMRSLWELFHPRLSEPSVPAHHNKHALLTFWHHSLVDCPENAAQVANCPEITRNIAFNYILADHDDAEIVTYNRSMLPAYYGLLRLCCEQSRALTRQLSQHQNLQWAFKNITPHPTQYAAAVDELFKLMALFATRHPDASEQEKLDVTQFRRAVIVSYTSSLDARVSWSTLISALKILVDNEEDRTMVIFNGGIEMCFEALHTLHSMHHEATACHVAGDLFDLLGEMLLLLATLRTRTDSPAQKKQQQQQQQLEQQLQLQQQQMLQKQQQQSQSQTQTPQSPQQKEKQLQQQMQQHLQLQQLQQMQFQQQHFLRQQHQHSALAKALPDAVKRLATLLNTFNSPEISRMALEVLKELVRNPSLETISILAPILINCHLSVANAPNAIGPLGPYFPRRGAKHTPWPLGAKNSPRPPRPMVQMCIALAELTPRGLDADYDVQVESFYRPYHDFIDVMMRMCVNTGTLNDTLVKLQCLVAIESTPLHFTYFPKFWVGIHNNALTHKYVELLVKNQLLVEYLHNVLRDERSMLKDACVREFLELYYHKVAAQLPVARMIYTINYGMHSKDDIDELCGDLFAIRIIAQATGVPASVRKELRGSLRALQNKSERFRKESERDPFPNKKQKRDSQKIKEKEHPQPESEKETSTENDKPSDVSMESSGNAEQATDSTKPPTPAGSDDEQMDKTSVPSSDDETELEDELQPTPKRNKKASNKKTAQDRVNEEREKRLITLITMESYIQSIFAILKRDASVPSSGATKEPSEEPCGEASTSAAAAVKLSRPKGACTPPEPITDVNDTRCNIDTETEAEADEQSPKTSQTNGSQQNESPPAATSADTAPANPSPAPAAAVASTSQAASPTQI.

Disordered stretches follow at residues 101–172 (AQQQ…HKSH), 518–590 (NVTA…ISPE), 660–688 (DVPSSDEADGEADGDGEGELLADSDECSD), 851–878 (VVSGGKQHHSPKASQGSSTSGSTPVQPS), and 1491–1611 (SRRG…PALS). Over residues 106–133 (EQQRDEASAQAEAKESSAPAEEPKKEEP) the composition is skewed to basic and acidic residues. The span at 134 to 143 (SGSAGEEAQG) shows a compositional bias: low complexity. Pro residues predominate over residues 150 to 164 (KKPPVGPCTPPPPQT). Residues 522 to 532 (SSSDSGSIEGS) are compositionally biased toward low complexity. Positions 576–585 (ICDPTTEKGK) are enriched in basic and acidic residues. Residues 660-687 (DVPSSDEADGEADGDGEGELLADSDECS) show a composition bias toward acidic residues. Over residues 862 to 876 (KASQGSSTSGSTPVQ) the composition is skewed to polar residues. A compositionally biased stretch (basic residues) spans 1511–1520 (VKKSSMGRRR). A compositionally biased stretch (polar residues) spans 1550 to 1567 (TPSTGLQDVETEASSSSG). A compositionally biased stretch (basic and acidic residues) spans 1583-1594 (KGETFEQEKERP). Over residues 1600–1609 (PPSPTPPPPA) the composition is skewed to pro residues. The USP domain occupies 2015–2380 (VGLTNLGATC…SAYMLFYERR (366 aa)). Catalysis depends on C2024, which acts as the Nucleophile. Residues 2249–2263 (YKEERERRQKEKEGA) are compositionally biased toward basic and acidic residues. The segment at 2249–2274 (YKEERERRQKEKEGADGSGDGNDNEK) is disordered. Catalysis depends on H2305, which acts as the Proton acceptor. Disordered stretches follow at residues 2391 to 2529 (ELLV…TSKA), 3322 to 3344 (QQSQSQTQTPQSPQQKEKQLQQQ), 3657 to 3776 (SERF…EERE), and 3800 to 3912 (ASVP…PTQI). Basic and acidic residues-rich tracts occupy residues 2402–2413 (VEEKSEAEEPTK) and 2433–2488 (EKDK…EKPT). The span at 2504-2523 (NCDNHQQNNNSNSKASNDQQ) shows a compositional bias: low complexity. Basic and acidic residues predominate over residues 3657–3703 (SERFRKESERDPFPNKKQKRDSQKIKEKEHPQPESEKETSTENDKPS). Over residues 3706-3721 (SMESSGNAEQATDSTK) the composition is skewed to polar residues. The segment covering 3741–3751 (SDDETELEDEL) has biased composition (acidic residues). A compositionally biased stretch (basic and acidic residues) spans 3766-3776 (TAQDRVNEERE). The span at 3865 to 3877 (PKTSQTNGSQQNE) shows a compositional bias: polar residues. Positions 3878–3912 (SPPAATSADTAPANPSPAPAAAVASTSQAASPTQI) are enriched in low complexity.

The protein belongs to the peptidase C19 family. Interacts with Myc and ago.

The protein resides in the nucleus. The enzyme catalyses Thiol-dependent hydrolysis of ester, thioester, amide, peptide and isopeptide bonds formed by the C-terminal Gly of ubiquitin (a 76-residue protein attached to proteins as an intracellular targeting signal).. Functionally, ubiquitin hydrolase that can remove conjugated ubiquitin from target proteins and polyubiquitin chains. Essential for Myc-mediated cell growth and proliferation in developing eyes and wings. In the wing and eye, the deubiquitinating activity acts as an antagonist to the SCF E3 ubiquitin-protein ligase member archipelago (ago) to regulate Myc and CycE stability and thus control cell growth and proliferation. Also appears to regulate ago by modulating its induction by Myc. May also promote cell apoptosis in the wing imaginal disk, acting in an apoptotic pathway that appears to be largely independent of Myc. Required for preventing the activation of the immune deficiency (Imd) and Toll signaling cascades under unchallenged conditions. Also appears to be involved in modulating the differential expression of certain antimicrobial peptides (AMP) in response to infection by either Gram-positive or Gram-negative bacteria. Involved in the regulation of DNA damage repair pathways, including euchromatic site-specific double strand break (DSB) repair. The chain is Ubiquitin carboxyl-terminal hydrolase puf from Drosophila melanogaster (Fruit fly).